We begin with the raw amino-acid sequence, 305 residues long: N-acetylneuraminate lyase (305 aa).

Residues threonine 51 and threonine 52 each contribute to the aceneuramate site. Tyrosine 143 functions as the Proton donor in the catalytic mechanism. Lysine 173 functions as the Schiff-base intermediate with substrate in the catalytic mechanism. Aceneuramate is bound by residues threonine 175, glycine 197, aspartate 199, glutamate 200, and serine 216.

It belongs to the DapA family. NanA subfamily. As to quaternary structure, homotetramer.

It is found in the cytoplasm. The catalysed reaction is aceneuramate = aldehydo-N-acetyl-D-mannosamine + pyruvate. The protein operates within amino-sugar metabolism; N-acetylneuraminate degradation. In terms of biological role, catalyzes the cleavage of N-acetylneuraminic acid (sialic acid) to form pyruvate and N-acetylmannosamine via a Schiff base intermediate. It prevents sialic acids from being recycled and returning to the cell surface. Involved in the N-glycolylneuraminic acid (Neu5Gc) degradation pathway. The polypeptide is N-acetylneuraminate lyase (Xenopus tropicalis (Western clawed frog)).